We begin with the raw amino-acid sequence, 732 residues long: Bromodomain-containing factor 1 (732 aa).

Over residues 1–22 (MSETFPETNTPVQTPSTESFVN) the composition is skewed to polar residues. 5 disordered regions span residues 1–207 (MSET…NLPE), 324–380 (TNVA…ETKP), 491–517 (NKPV…EDNV), 556–600 (REQQ…TPPQ), and 700–732 (VNGQ…SEEE). Low complexity predominate over residues 37–51 (SQDSDSNQQSSHQEP). Residues 89–100 (ASQTGVIQTEVS) are compositionally biased toward polar residues. The segment covering 137-147 (EAPEENPQEEV) has biased composition (acidic residues). Positions 206 to 315 (PENPIPQHQA…AQFEKLMVKV (110 aa)) constitute a Bromo 1 domain. Positions 327 to 338 (AEATSVATSPTT) are enriched in polar residues. Residues 370-380 (KSKELPYETKP) are compositionally biased toward basic and acidic residues. In terms of domain architecture, Bromo 2 spans 383-492 (KKVAAELRFC…AVFDKKWANK (110 aa)). A coiled-coil region spans residues 529-569 (AIQVMENQIIRMRKELDELKKEHLKKLREQQAARKKKKQQK). A compositionally biased stretch (basic residues) spans 561-579 (ARKKKKQQKGKRRAPKAKH). Residues 590 to 600 (PPEPPKLTPPQ) show a composition bias toward pro residues. An NET domain is found at 593 to 672 (PPKLTPPQPV…GDKALKNSAG (80 aa)). Over residues 718–732 (ESSEDEASSESSEEE) the composition is skewed to acidic residues.

This sequence belongs to the BET family.

It is found in the nucleus. In terms of biological role, transcription factor involved in the expression of a broad class of genes including snRNAs. Required for sporulation and DNA-damage repair. Prevents the spreading of SIR silencing at telomeres and protects histone H4, but not H3, from deacetylation. This Candida albicans (strain SC5314 / ATCC MYA-2876) (Yeast) protein is Bromodomain-containing factor 1 (BDF1).